A 282-amino-acid chain; its full sequence is Large ribosomal subunit protein uL2 (282 aa).

Disordered stretches follow at residues 31–55 and 223–282; these read KRLT…RHIG and LAMN…NTQR. Basic residues-rich tracts occupy residues 34-55 and 270-282; these read TKPV…RHIG and VTRR…NTQR.

Belongs to the universal ribosomal protein uL2 family. Part of the 50S ribosomal subunit. Forms a bridge to the 30S subunit in the 70S ribosome.

One of the primary rRNA binding proteins. Required for association of the 30S and 50S subunits to form the 70S ribosome, for tRNA binding and peptide bond formation. It has been suggested to have peptidyltransferase activity; this is somewhat controversial. Makes several contacts with the 16S rRNA in the 70S ribosome. The protein is Large ribosomal subunit protein uL2 of Anaeromyxobacter dehalogenans (strain 2CP-C).